Here is a 277-residue protein sequence, read N- to C-terminus: Tryptophan synthase alpha chain (277 aa).

Active-site proton acceptor residues include Glu-42 and Glu-53.

This sequence belongs to the TrpA family. In terms of assembly, tetramer of two alpha and two beta chains.

The enzyme catalyses (1S,2R)-1-C-(indol-3-yl)glycerol 3-phosphate + L-serine = D-glyceraldehyde 3-phosphate + L-tryptophan + H2O. The protein operates within amino-acid biosynthesis; L-tryptophan biosynthesis; L-tryptophan from chorismate: step 5/5. In terms of biological role, the alpha subunit is responsible for the aldol cleavage of indoleglycerol phosphate to indole and glyceraldehyde 3-phosphate. The chain is Tryptophan synthase alpha chain from Natronomonas pharaonis (strain ATCC 35678 / DSM 2160 / CIP 103997 / JCM 8858 / NBRC 14720 / NCIMB 2260 / Gabara) (Halobacterium pharaonis).